The following is a 431-amino-acid chain: Glucose-1-phosphate adenylyltransferase (431 aa).

Position 39 (Lys-39) interacts with beta-D-fructose 1,6-bisphosphate. Arg-40, His-46, and Arg-52 together coordinate AMP. Residue Tyr-114 coordinates alpha-D-glucose 1-phosphate. Arg-130 contributes to the AMP binding site. Alpha-D-glucose 1-phosphate contacts are provided by residues Gly-179, 194–195, and Ser-212; that span reads EK. Arg-386 provides a ligand contact to AMP. 429–431 contacts beta-D-fructose 1,6-bisphosphate; sequence QER.

The protein belongs to the bacterial/plant glucose-1-phosphate adenylyltransferase family. Homotetramer.

The enzyme catalyses alpha-D-glucose 1-phosphate + ATP + H(+) = ADP-alpha-D-glucose + diphosphate. Its pathway is glycan biosynthesis; glycogen biosynthesis. With respect to regulation, allosterically activated by fructose-1,6-bisphosphate (F16BP) and inhibited by AMP. Functionally, involved in the biosynthesis of ADP-glucose, a building block required for the elongation reactions to produce glycogen. Catalyzes the reaction between ATP and alpha-D-glucose 1-phosphate (G1P) to produce pyrophosphate and ADP-Glc. The sequence is that of Glucose-1-phosphate adenylyltransferase from Klebsiella pneumoniae subsp. pneumoniae (strain ATCC 700721 / MGH 78578).